Reading from the N-terminus, the 384-residue chain is N-acetyldiaminopimelate deacetylase (384 aa).

Asp-73 is a catalytic residue. Glu-132 functions as the Proton acceptor in the catalytic mechanism.

Belongs to the peptidase M20A family. N-acetyldiaminopimelate deacetylase subfamily.

The catalysed reaction is N-acetyl-(2S,6S)-2,6-diaminopimelate + H2O = (2S,6S)-2,6-diaminopimelate + acetate. It participates in amino-acid biosynthesis; L-lysine biosynthesis via DAP pathway; LL-2,6-diaminopimelate from (S)-tetrahydrodipicolinate (acetylase route): step 3/3. Catalyzes the conversion of N-acetyl-diaminopimelate to diaminopimelate and acetate. The polypeptide is N-acetyldiaminopimelate deacetylase (Limosilactobacillus fermentum (strain NBRC 3956 / LMG 18251) (Lactobacillus fermentum)).